The sequence spans 189 residues: UPF0301 protein PA14_05290 (189 aa).

This sequence belongs to the UPF0301 (AlgH) family.

The protein is UPF0301 protein PA14_05290 of Pseudomonas aeruginosa (strain UCBPP-PA14).